A 319-amino-acid polypeptide reads, in one-letter code: Cobalamin biosynthesis protein CobD (319 aa).

4 consecutive transmembrane segments (helical) span residues 56-76, 153-173, 204-224, and 290-310; these read GLWI…LWLM, VDGV…LAMA, LANW…AWFI, and IPLS…LFAL.

Belongs to the CobD/CbiB family.

It localises to the cell membrane. The protein operates within cofactor biosynthesis; adenosylcobalamin biosynthesis. Converts cobyric acid to cobinamide by the addition of aminopropanol on the F carboxylic group. This chain is Cobalamin biosynthesis protein CobD, found in Photorhabdus laumondii subsp. laumondii (strain DSM 15139 / CIP 105565 / TT01) (Photorhabdus luminescens subsp. laumondii).